A 545-amino-acid chain; its full sequence is Chaperonin GroEL (545 aa).

Residues 30-33, lysine 51, 87-91, glycine 415, and aspartate 495 contribute to the ATP site; these read TLGP and DGTTT.

Belongs to the chaperonin (HSP60) family. As to quaternary structure, forms a cylinder of 14 subunits composed of two heptameric rings stacked back-to-back. Interacts with the co-chaperonin GroES.

It localises to the cytoplasm. It carries out the reaction ATP + H2O + a folded polypeptide = ADP + phosphate + an unfolded polypeptide.. Together with its co-chaperonin GroES, plays an essential role in assisting protein folding. The GroEL-GroES system forms a nano-cage that allows encapsulation of the non-native substrate proteins and provides a physical environment optimized to promote and accelerate protein folding. This is Chaperonin GroEL from Shewanella sp. (strain MR-7).